Consider the following 714-residue polypeptide: Structure-specific endonuclease subunit SLX4 1 (714 aa).

Basic and acidic residues-rich tracts occupy residues 1-14 (MSPEGEESHAEDNL) and 24-34 (IHEETLAEESH). Disordered stretches follow at residues 1 to 116 (MSPE…QGSI) and 337 to 369 (DSSGPVNDKQPSVASETVESDSTPIVSPVKTPQ). Over residues 36 to 46 (QSIQRSISRLS) the composition is skewed to low complexity. Residues 79–92 (KTKKRKLKVSKPRK) show a composition bias toward basic residues.

The protein belongs to the SLX4 family. Forms a heterodimer with SLX1. Phosphorylated in response to DNA damage.

It localises to the nucleus. Its function is as follows. Regulatory subunit of the SLX1-SLX4 structure-specific endonuclease that resolves DNA secondary structures generated during DNA repair and recombination. Has endonuclease activity towards branched DNA substrates, introducing single-strand cuts in duplex DNA close to junctions with ss-DNA. This Candida tropicalis (strain ATCC MYA-3404 / T1) (Yeast) protein is Structure-specific endonuclease subunit SLX4 1.